The chain runs to 290 residues: MKVKVIPVLEDNYMYLVIEELTREAVAVDVAVPKRLLEIVGREGVSLTAVLTTHHHWDHARGNPELARLRPGLAVLGADERIFSLTRRLAHGEELRFGAIHVRCLLTPGHTAGHMSYFLWEDDCPDPPALFSGDALSVAGCGSCLEGSAQQMYQSLAELGTLPPETKVFCGHEHTLSNLEFAQKVEPCNDHVRAKLSWAKARPLSRRGKRVGGEGTGFGVGGALRQGLMVTGACGHSRRGMRMTCPLCRRLWARSASTTPSCGWREYGCCPGASTVTWTLRKASGDCVLG.

7 residues coordinate Zn(2+): His-54, His-56, Asp-58, His-59, His-110, Asp-134, and His-172.

Belongs to the metallo-beta-lactamase superfamily. Glyoxalase II family. Zn(2+) serves as cofactor.

In terms of biological role, hydrolase acting on ester bonds. The sequence is that of Hydroxyacylglutathione hydrolase-like protein (HAGHL) from Homo sapiens (Human).